A 242-amino-acid polypeptide reads, in one-letter code: MSKSRLTVFSFVRRFLLRLMVVLAIFWGGGIALFSVAPVPFSAVMVERQVSAWLHGNFRYVAHSDWVSMDQISPWMGLAVIAAEDQKFPEHWGFDVASIEQALAHNERNENRIRGASTISQQTAKNLFLWDGRSWVRKGLEAGLTLGIETVWSKKRILTVYLNIAEFGDGVFGVEAAAQRYFHKPASKLTRSQAALLAAVLPNPLRFKVSAPSGYVRSRQAWILRQMYQLGGEPFMQQHQLD.

A helical membrane pass occupies residues 19 to 39 (LMVVLAIFWGGGIALFSVAPV).

Belongs to the glycosyltransferase 51 family.

Its subcellular location is the cell inner membrane. The enzyme catalyses [GlcNAc-(1-&gt;4)-Mur2Ac(oyl-L-Ala-gamma-D-Glu-L-Lys-D-Ala-D-Ala)](n)-di-trans,octa-cis-undecaprenyl diphosphate + beta-D-GlcNAc-(1-&gt;4)-Mur2Ac(oyl-L-Ala-gamma-D-Glu-L-Lys-D-Ala-D-Ala)-di-trans,octa-cis-undecaprenyl diphosphate = [GlcNAc-(1-&gt;4)-Mur2Ac(oyl-L-Ala-gamma-D-Glu-L-Lys-D-Ala-D-Ala)](n+1)-di-trans,octa-cis-undecaprenyl diphosphate + di-trans,octa-cis-undecaprenyl diphosphate + H(+). It functions in the pathway cell wall biogenesis; peptidoglycan biosynthesis. Functionally, peptidoglycan polymerase that catalyzes glycan chain elongation from lipid-linked precursors. In Escherichia coli O127:H6 (strain E2348/69 / EPEC), this protein is Biosynthetic peptidoglycan transglycosylase.